A 385-amino-acid chain; its full sequence is Spermidine/putrescine import ATP-binding protein PotA (385 aa).

Positions 27-257 constitute an ABC transporter domain; sequence ASFRAVSKHY…PANLFVAQFA (231 aa). 59–66 provides a ligand contact to ATP; sequence GPSGCGKT.

This sequence belongs to the ABC transporter superfamily. Spermidine/putrescine importer (TC 3.A.1.11.1) family. As to quaternary structure, the complex is composed of two ATP-binding proteins (PotA), two transmembrane proteins (PotB and PotC) and a solute-binding protein (PotD).

It is found in the cell inner membrane. The enzyme catalyses ATP + H2O + polyamine-[polyamine-binding protein]Side 1 = ADP + phosphate + polyamineSide 2 + [polyamine-binding protein]Side 1.. Part of the ABC transporter complex PotABCD involved in spermidine/putrescine import. Responsible for energy coupling to the transport system. The sequence is that of Spermidine/putrescine import ATP-binding protein PotA from Methylococcus capsulatus (strain ATCC 33009 / NCIMB 11132 / Bath).